We begin with the raw amino-acid sequence, 317 residues long: N(5)-(carboxyethyl)ornithine synthase (317 aa).

Pyruvate-binding residues include arginine 15, lysine 71, and histidine 92. 172 to 177 serves as a coordination point for NADP(+); it reads GSGNVS.

The protein belongs to the AlaDH/PNT family. CEOS subfamily. In terms of assembly, homotetramer.

The enzyme catalyses N(5)-[1(S)-1-carboxyethyl]-L-ornithine + NADP(+) + H2O = L-ornithine + pyruvate + NADPH + H(+). Catalyzes the NADPH-dependent reductive condensation between pyruvic acid and the side chain amino group of L-ornithine to form N(5)-(L-1-carboxyethyl)-L-ornithine. To a lesser extent, can also use L-lysine as substrate (yielding N(6)-(L-1-carboxyethyl)-L-lysine), and the D-isomers of the 2 basic amino acids. Can use alpha-keto acids other than pyruvate, e.g. glyoxylate. The polypeptide is N(5)-(carboxyethyl)ornithine synthase (ceo) (Clostridium botulinum (strain Hall / ATCC 3502 / NCTC 13319 / Type A)).